The primary structure comprises 329 residues: Microtubule-associated protein RP/EB family member 1C (329 aa).

The 103-residue stretch at Phe-13–Asp-115 folds into the Calponin-homology (CH) domain. The span at Arg-130–Lys-141 shows a compositional bias: basic and acidic residues. Residues Arg-130–Ala-203 form a disordered region. The segment covering Ser-174–Gly-185 has biased composition (low complexity). An EB1 C-terminal domain is found at Pro-193–Gly-263. Residues Lys-289–Arg-311 form a required for nuclear localization region.

Belongs to the MAPRE family. As to quaternary structure, homodimer. Highly expressed in the root and shoot meristems, in guard cells of leaf stomata, pollen grains and pollen tubes.

The protein resides in the nucleus. The protein localises to the cytoplasm. It localises to the cytoskeleton. Its subcellular location is the spindle. It is found in the phragmoplast. In terms of biological role, plant-specific EB1 subtype that functions preferentially at early stages of plant mitosis by regulating spindle positioning and chromosome segregation. Accumulates in the prophase nucleus and is required to maintain spindle bipolarity during premetaphase and/or metaphase and for efficient segregation of chromosomes at anaphase. May play a role in the dynamics of microtubule network in elongating pollen tubes. The protein is Microtubule-associated protein RP/EB family member 1C (EB1C) of Arabidopsis thaliana (Mouse-ear cress).